The sequence spans 355 residues: Sulfate/thiosulfate import ATP-binding protein CysA (355 aa).

Positions 3–233 (IIINNVSKQF…PASPFVMGFI (231 aa)) constitute an ABC transporter domain. 35–42 (GPSGSGKS) serves as a coordination point for ATP.

This sequence belongs to the ABC transporter superfamily. Sulfate/tungstate importer (TC 3.A.1.6) family. The complex is composed of two ATP-binding proteins (CysA), two transmembrane proteins (CysT and CysW) and a solute-binding protein (CysP).

It localises to the cell inner membrane. It catalyses the reaction sulfate(out) + ATP + H2O = sulfate(in) + ADP + phosphate + H(+). The enzyme catalyses thiosulfate(out) + ATP + H2O = thiosulfate(in) + ADP + phosphate + H(+). Its function is as follows. Part of the ABC transporter complex CysAWTP involved in sulfate/thiosulfate import. Responsible for energy coupling to the transport system. The polypeptide is Sulfate/thiosulfate import ATP-binding protein CysA (Synechocystis sp. (strain ATCC 27184 / PCC 6803 / Kazusa)).